We begin with the raw amino-acid sequence, 134 residues long: Putative membrane protein insertion efficiency factor (134 aa).

The protein belongs to the UPF0161 family.

The protein localises to the cell inner membrane. Its function is as follows. Could be involved in insertion of integral membrane proteins into the membrane. The chain is Putative membrane protein insertion efficiency factor from Rhizobium etli (strain ATCC 51251 / DSM 11541 / JCM 21823 / NBRC 15573 / CFN 42).